The sequence spans 1182 residues: IQ motif and SEC7 domain-containing protein 3 (1182 aa).

The stretch at 20–56 forms a coiled coil; the sequence is AIVQNQQSLIHTQRERIDELERRLDELSAENRSLWEH. Disordered stretches follow at residues 62-157 and 230-275; these read AQPP…ERPP and AAGR…RQQP. A compositionally biased stretch (pro residues) spans 63–78; it reads QPPPGLVPPSSAPLPA. Low complexity-rich tracts occupy residues 79 to 105 and 254 to 263; these read APATAPAAAARAQEPLQDQGQRSAAAP and GAGAASPRAG. Ser259 is modified (phosphoserine). The region spanning 315-344 is the IQ domain; sequence SRRAACTIQTAFRQYQLSKNFEKIRNSLLE. Disordered stretches follow at residues 444–479 and 521–616; these read AGPPGLEAEGRAPESAGPGPGDDAAETPGLPPAHSG and EPAA…ASAS. Basic and acidic residues predominate over residues 533–548; it reads SGREAPEAPAVGREDA. The segment covering 555 to 569 has biased composition (low complexity); the sequence is AEAAASGAADGATAP. The segment covering 572 to 581 has biased composition (acidic residues); sequence EEEEEEEETA. Residues 598-616 show a composition bias toward low complexity; that stretch reads SSSSTSTKSAKSGSEASAS. The SEC7 domain maps to 644–837; sequence TLSTDTLRKR…VGIYERIQQK (194 aa). The PH domain maps to 850–983; sequence TKVEKSIVGM…LKESIAEVTE (134 aa). The stretch at 964–992 forms a coiled coil; sequence SDEMQKFVEDLKESIAEVTELEQIRIEWE. Disordered regions lie at residues 1002–1090 and 1121–1182; these read LSFK…PGTL and YTSS…RSLV. A compositionally biased stretch (basic and acidic residues) spans 1022 to 1033; that stretch reads AKREAALRERPA. Positions 1043 to 1052 are enriched in polar residues; that stretch reads NRLQTSQHNS. Residues 1061 to 1087 show a composition bias toward pro residues; the sequence is PVPPPDLQPSPPRQQTPPLPPPPPTPP. The span at 1121 to 1132 shows a compositional bias: low complexity; it reads YTSSSSDSCGST. The segment covering 1147 to 1157 has biased composition (pro residues); that stretch reads PPLPPPPPPYN.

It belongs to the BRAG family. As to quaternary structure, interacts with DLG1 and DLG4. Interacts with GPHN. Expressed specifically in the adult brain, predominantly in the cerebral cortex and the olfactory bulb, but not in the fetal brain. Expressed only in mature neurons, but not in undifferentiated neural stem precursor cells (NSPCs), nor in glioma cells.

The protein localises to the cytoplasm. It localises to the postsynaptic density. Functionally, acts as a guanine nucleotide exchange factor (GEF) for ARF1. The chain is IQ motif and SEC7 domain-containing protein 3 (IQSEC3) from Homo sapiens (Human).